The primary structure comprises 299 residues: MKPDAHHVKQFLLRLQDDICQTLSAVDGANFVEDSWRREAGGGGRSRVLRNGGIFEQAGVNFSHVHGDAMPASATAHRPELAGRSFEAMGVSLVVHPHNPYIPTSHANVRFFIAEKPGADPVWWFGGGFDLTPYYGFEEDAVHWHRTARDLCQPFGDDVYPRYKKWCDDYFFLKHRNEQRGVGGLFFDDLNTPDFDHCFDFMQAVGNGYTRAYLPIVERRKAMVWGERERNFQLYRRGRYVEFNLVWDRGTLFGLQTGGRTESILMSMPPLVRWEYDWQPEAGSPEAALSEFIQVRDWI.

Substrate is bound at residue Ser-92. Positions 96 and 106 each coordinate a divalent metal cation. Catalysis depends on His-106, which acts as the Proton donor. 108–110 (NVR) provides a ligand contact to substrate. A divalent metal cation is bound by residues His-145 and His-175. Residues 240-275 (YVEFNLVWDRGTLFGLQTGGRTESILMSMPPLVRWE) form an important for dimerization region. A substrate-binding site is contributed by 258-260 (GGR).

Belongs to the aerobic coproporphyrinogen-III oxidase family. Homodimer. The cofactor is a divalent metal cation.

It localises to the cytoplasm. The catalysed reaction is coproporphyrinogen III + O2 + 2 H(+) = protoporphyrinogen IX + 2 CO2 + 2 H2O. It functions in the pathway porphyrin-containing compound metabolism; protoporphyrin-IX biosynthesis; protoporphyrinogen-IX from coproporphyrinogen-III (O2 route): step 1/1. In terms of biological role, involved in the heme biosynthesis. Catalyzes the aerobic oxidative decarboxylation of propionate groups of rings A and B of coproporphyrinogen-III to yield the vinyl groups in protoporphyrinogen-IX. The protein is Oxygen-dependent coproporphyrinogen-III oxidase of Salmonella heidelberg (strain SL476).